A 316-amino-acid polypeptide reads, in one-letter code: MEHLLKRTFDITENILLIILFIELIIGLIGNGFTALVHCMDWVKRKKMSLVNKILTALATSRIFLLWFMLVGFPISSLYPYLVTTRLMIQFTSTLWTIANHISVWFATCLSVFYFLKIANFSNSPFLYLKRRVEKVVSVTLLVSLVLLFLNILLLNLEINMCINEYHQINISYIFISYYHLSCQIQVLGSHIIFLSVPVVLSLSTFLLLIFSLWTLHKRMQQHVQGGRDARTTAHFKALQAVIAFLLLYSIFILSLLLQFWIHGLRKKPPFIAFCQVVDTAFPSFHSYVLILRDRKLRHASLSVLSWLKCRPNYVK.

At 1-14 (MEHLLKRTFDITEN) the chain is on the extracellular side. A helical membrane pass occupies residues 15–35 (ILLIILFIELIIGLIGNGFTA). Topologically, residues 36 to 62 (LVHCMDWVKRKKMSLVNKILTALATSR) are cytoplasmic. The chain crosses the membrane as a helical span at residues 63–83 (IFLLWFMLVGFPISSLYPYLV). Residues 84-94 (TTRLMIQFTST) lie on the Extracellular side of the membrane. The chain crosses the membrane as a helical span at residues 95–115 (LWTIANHISVWFATCLSVFYF). Residues 116-135 (LKIANFSNSPFLYLKRRVEK) lie on the Cytoplasmic side of the membrane. The chain crosses the membrane as a helical span at residues 136–156 (VVSVTLLVSLVLLFLNILLLN). Residues 157–191 (LEINMCINEYHQINISYIFISYYHLSCQIQVLGSH) lie on the Extracellular side of the membrane. N-linked (GlcNAc...) asparagine glycosylation is present at asparagine 170. A helical membrane pass occupies residues 192-212 (IIFLSVPVVLSLSTFLLLIFS). At 213 to 241 (LWTLHKRMQQHVQGGRDARTTAHFKALQA) the chain is on the cytoplasmic side. Residues 242 to 262 (VIAFLLLYSIFILSLLLQFWI) form a helical membrane-spanning segment. Residues 263–270 (HGLRKKPP) lie on the Extracellular side of the membrane. A helical transmembrane segment spans residues 271 to 291 (FIAFCQVVDTAFPSFHSYVLI). Residues 292–316 (LRDRKLRHASLSVLSWLKCRPNYVK) are Cytoplasmic-facing.

It belongs to the G-protein coupled receptor T2R family.

The protein resides in the membrane. Functionally, putative taste receptor which may play a role in the perception of bitterness. This is Taste receptor type 2 member 109 from Mus musculus (Mouse).